Consider the following 458-residue polypeptide: Ammonium transporter Rh type B (458 aa).

Topologically, residues 1 to 13 are cytoplasmic; it reads MAKSPRRVAGRRL. Residues 14–34 form a helical membrane-spanning segment; that stretch reads LLPLLCLFFQGATAILFAIFV. Residues 35–61 lie on the Extracellular side of the membrane; sequence RYDQQTDAALWHGGNHSNADNEFYFRY. N-linked (GlcNAc...) asparagine glycosylation occurs at Asn-49. Residues 62–82 form a helical membrane-spanning segment; sequence PSFQDVHAMVFVGFGFLMVFL. Topologically, residues 83 to 86 are cytoplasmic; that stretch reads QRYG. Residues 87-107 form a helical membrane-spanning segment; sequence YSSLGFTFLLGAFALQWATLV. Over 108–124 the chain is Extracellular; the sequence is QGFLHSFHGGHIHVGME. The helical transmembrane segment at 125 to 145 threads the bilayer; the sequence is SLINADFCAGAVLISFGAVLG. At 146-149 the chain is on the cytoplasmic side; sequence KTGP. Residues 150–170 form a helical membrane-spanning segment; sequence AQLLLMALLEVALFGLNEFVL. Over 171–178 the chain is Extracellular; that stretch reads LCLLGVRD. The helical transmembrane segment at 179–201 threads the bilayer; it reads AGGSMTIHTFGAYFGLVLSRVLY. Residues 202–219 lie on the Cytoplasmic side of the membrane; the sequence is RPHLEKSQHRQGSVYHSD. A helical membrane pass occupies residues 220-240; sequence LFAMIGTIFLWIFWPSFNSAL. Topologically, residues 241 to 251 are extracellular; that stretch reads TSRGDGQPRTA. A helical membrane pass occupies residues 252–272; sequence LNTYYSLTASTLSTFALSALV. Topologically, residues 273-282 are cytoplasmic; that stretch reads GKDGRLDMVH. The chain crosses the membrane as a helical span at residues 283–303; that stretch reads VQNAALAGGVVVGTASEMMLT. Position 304 (Pro-304) is a topological domain, extracellular. The chain crosses the membrane as a helical span at residues 305–325; it reads FGALAAGCLAGAISTLGYKFF. Residues 326–346 lie on the Cytoplasmic side of the membrane; sequence TPILESKLKIQDTCGVHNLHG. The chain crosses the membrane as a helical span at residues 347 to 367; that stretch reads MPGVLGALLGALMTGLTTHEA. Over 368 to 393 the chain is Extracellular; that stretch reads YGDGLQSVFPLIAEGQRSATSQAIYQ. A helical membrane pass occupies residues 394–414; that stretch reads LFGLSVTLLFASAGGVLGGLL. At 415–458 the chain is on the cytoplasmic side; it reads LKLPFLDAPPDSQCYEDQMCWEVPGEHGYEAQEALRVEEPDTEA. The tract at residues 416-424 is interaction with ANK3; it reads KLPFLDAPP. The Basolateral sorting signal motif lies at 429-432; it reads YEDQ.

Belongs to the ammonium transporter (TC 2.A.49) family. Rh subfamily. As to quaternary structure, interacts (via C-terminus) with ANK2 and ANK3; required for targeting to the basolateral membrane. N-glycosylated.

The protein resides in the cell membrane. The protein localises to the basolateral cell membrane. The catalysed reaction is NH4(+)(in) = NH4(+)(out). It catalyses the reaction methylamine(out) = methylamine(in). It carries out the reaction CO2(out) = CO2(in). Ammonium transporter involved in the maintenance of acid-base homeostasis. Transports ammonium and its related derivative methylammonium across the basolateral plasma membrane of epithelial cells likely contributing to renal transepithelial ammonia transport and ammonia metabolism. May transport either NH4(+) or NH3 ammonia species predominantly mediating an electrogenic NH4(+) transport. May act as a CO2 channel providing for renal acid secretion. The sequence is that of Ammonium transporter Rh type B (RHBG) from Oryctolagus cuniculus (Rabbit).